Here is a 185-residue protein sequence, read N- to C-terminus: Pyruvate/ketoisovalerate oxidoreductases common subunit gamma (185 aa).

Heterotetramer of one alpha, one beta, one delta and one gamma chain.

It carries out the reaction 2 oxidized [2Fe-2S]-[ferredoxin] + pyruvate + CoA = 2 reduced [2Fe-2S]-[ferredoxin] + acetyl-CoA + CO2 + H(+). It catalyses the reaction 3-methyl-2-oxobutanoate + 2 oxidized [2Fe-2S]-[ferredoxin] + CoA = 2-methylpropanoyl-CoA + 2 reduced [2Fe-2S]-[ferredoxin] + CO2 + H(+). In Pyrococcus furiosus (strain ATCC 43587 / DSM 3638 / JCM 8422 / Vc1), this protein is Pyruvate/ketoisovalerate oxidoreductases common subunit gamma (porG).